Here is a 384-residue protein sequence, read N- to C-terminus: Monomeric sarcosine oxidase (384 aa).

An FAD-binding site is contributed by D6–F36. The residue at position 315 (C315) is an S-8alpha-FAD cysteine.

It belongs to the MSOX/MTOX family. MSOX subfamily. In terms of assembly, monomer. It depends on FAD as a cofactor.

Its subcellular location is the cytoplasm. The enzyme catalyses sarcosine + O2 + H2O = formaldehyde + glycine + H2O2. In terms of biological role, catalyzes the oxidative demethylation of sarcosine. This is Monomeric sarcosine oxidase from Streptomyces avermitilis (strain ATCC 31267 / DSM 46492 / JCM 5070 / NBRC 14893 / NCIMB 12804 / NRRL 8165 / MA-4680).